A 361-amino-acid polypeptide reads, in one-letter code: MSSEVSAIGFEGFEKRLEISFFEPSFFADPEGKGLRVLSKNQLDEFLGPAECTIVASLSNEHVDSYVLSESSLFVYAYKIIIKTCGTTKLLKSIPPILKLADSLSLTVRSVRYTRGCFIFPGAQSYPHRSFSEEVSVLDNYFGKLGSGSKAYIMGGSDKQQKWHVYSACAASTRTLDPVYTMEMCMTSLNRDKASVFYKTNSSSATSVTDNSGLRDILPNSRICDFEFDPCGYSMNAVEGPAVSTIHITPEDGFSYSSFEAVGYDPKSVNLSDLVARVLNCFQPGEFSIALQADIASELLEKTSSVHVKGYRVEEKTCEELGMDGSIVYQKFVKTTERCESPRSVLKCCWKEEEKEEKEYQ.

Residues glutamate 11 and glutamate 14 contribute to the active site. Serine 71 functions as the Schiff-base intermediate with substrate; via pyruvic acid in the catalytic mechanism. Serine 71 carries the post-translational modification Pyruvic acid (Ser); by autocatalysis. Cysteine 85 acts as the Proton donor; for catalytic activity in catalysis. Catalysis depends on proton acceptor; for processing activity residues serine 234 and histidine 247.

This sequence belongs to the eukaryotic AdoMetDC family. Pyruvate serves as cofactor. Is synthesized initially as an inactive proenzyme. Formation of the active enzyme involves a self-maturation process in which the active site pyruvoyl group is generated from an internal serine residue via an autocatalytic post-translational modification. Two non-identical subunits are generated from the proenzyme in this reaction, and the pyruvate is formed at the N-terminus of the alpha chain, which is derived from the carboxyl end of the proenzyme. The post-translation cleavage follows an unusual pathway, termed non-hydrolytic serinolysis, in which the side chain hydroxyl group of the serine supplies its oxygen atom to form the C-terminus of the beta chain, while the remainder of the serine residue undergoes an oxidative deamination to produce ammonia and the pyruvoyl group blocking the N-terminus of the alpha chain.

It catalyses the reaction S-adenosyl-L-methionine + H(+) = S-adenosyl 3-(methylsulfanyl)propylamine + CO2. It participates in amine and polyamine biosynthesis; S-adenosylmethioninamine biosynthesis; S-adenosylmethioninamine from S-adenosyl-L-methionine: step 1/1. The protein is S-adenosylmethionine decarboxylase proenzyme (SAMDC) of Daucus carota (Wild carrot).